The chain runs to 228 residues: Protein JAZ7 (228 aa).

One can recognise a Tify domain in the interval 101-136; sequence LSPNESTLTIFYMGEVHIFPGISPEKAELIIDLVSK. The short motif at 176-199 is the Jas element; the sequence is MARRATLARFLEKRKHRLIKARPY. The Nuclear localization signal motif lies at 177 to 184; that stretch reads ARRATLAR.

The protein belongs to the TIFY/JAZ family. Interacts with MYC2 (via N-terminus). JAZ7 competes with MED25 for binding to MYC2. Interacts with MTB1 (via N-terminus).

Its subcellular location is the nucleus. Repressor of jasmonate responses. The sequence is that of Protein JAZ7 from Solanum lycopersicum (Tomato).